A 159-amino-acid polypeptide reads, in one-letter code: 3-dehydroquinate dehydratase (159 aa).

Residue Tyr-22 is the Proton acceptor of the active site. The substrate site is built by Asn-73, His-79, and Asp-86. The Proton donor role is filled by His-99. Substrate contacts are provided by residues 100-101 (IS) and Arg-110.

This sequence belongs to the type-II 3-dehydroquinase family. In terms of assembly, homododecamer.

The enzyme catalyses 3-dehydroquinate = 3-dehydroshikimate + H2O. Its pathway is metabolic intermediate biosynthesis; chorismate biosynthesis; chorismate from D-erythrose 4-phosphate and phosphoenolpyruvate: step 3/7. Functionally, catalyzes a trans-dehydration via an enolate intermediate. In Campylobacter jejuni subsp. doylei (strain ATCC BAA-1458 / RM4099 / 269.97), this protein is 3-dehydroquinate dehydratase.